A 398-amino-acid polypeptide reads, in one-letter code: 8-amino-7-oxononanoate synthase (398 aa).

Substrate is bound at residue Arg23. Pyridoxal 5'-phosphate is bound at residue Gly110 to Tyr111. Residue His135 participates in substrate binding. Residues Ser181, His209, and Thr237 each contribute to the pyridoxal 5'-phosphate site. N6-(pyridoxal phosphate)lysine is present on Lys240. Thr354 contributes to the substrate binding site.

It belongs to the class-II pyridoxal-phosphate-dependent aminotransferase family. BioF subfamily. As to quaternary structure, homodimer. Requires pyridoxal 5'-phosphate as cofactor.

The enzyme catalyses 6-carboxyhexanoyl-[ACP] + L-alanine + H(+) = (8S)-8-amino-7-oxononanoate + holo-[ACP] + CO2. It functions in the pathway cofactor biosynthesis; biotin biosynthesis. Its function is as follows. Catalyzes the decarboxylative condensation of pimeloyl-[acyl-carrier protein] and L-alanine to produce 8-amino-7-oxononanoate (AON), [acyl-carrier protein], and carbon dioxide. The protein is 8-amino-7-oxononanoate synthase of Anaeromyxobacter dehalogenans (strain 2CP-1 / ATCC BAA-258).